The sequence spans 180 residues: MSRIGRLPIKIPDAVKVDVKDNLVIVEGIRGRLVQDIKDSINVKVENGSVIVDRVLNDKKAKAYHGLYRSLIFNMVKGVTEGFSKSLTINGIGYRVEQQGNSLFLSLGYSTQFEYVIPDGISVKLDGNTKISVEGIDKFKVGQVAAEIRSLKKPEPYKGKGIKYDNEVIRRKVGKSGVKK.

It belongs to the universal ribosomal protein uL6 family. Part of the 50S ribosomal subunit.

Functionally, this protein binds to the 23S rRNA, and is important in its secondary structure. It is located near the subunit interface in the base of the L7/L12 stalk, and near the tRNA binding site of the peptidyltransferase center. The polypeptide is Large ribosomal subunit protein uL6 (Borreliella burgdorferi (strain ATCC 35210 / DSM 4680 / CIP 102532 / B31) (Borrelia burgdorferi)).